Here is a 70-residue protein sequence, read N- to C-terminus: Large ribosomal subunit protein bL31 (70 aa).

Cys16, Cys18, Cys37, and Cys40 together coordinate Zn(2+).

It belongs to the bacterial ribosomal protein bL31 family. Type A subfamily. In terms of assembly, part of the 50S ribosomal subunit. Requires Zn(2+) as cofactor.

In terms of biological role, binds the 23S rRNA. The chain is Large ribosomal subunit protein bL31 from Haemophilus ducreyi (strain 35000HP / ATCC 700724).